We begin with the raw amino-acid sequence, 331 residues long: MTKVYYEDAVKNNALEGKTVAVIGYGSQGHAHSQNLRDNGNNVIIGIREGKSAESARNDGFDVYSVSEAAEKADVIMILLPDETQGETYENEIKPNLKAGNALVFAHGFNIHFDVINPPSDVDVFLVAPKGPGHLVRRTFVEGGAVPSLFAIYQDATGNARDTALSYAKGIGATRAGVIETTFKEETETDLFGEQAVLCGGATHLIQAGFETLVEAGYQPELAYFEVLHEMKLIVDLMYEGGMEKMRHSISNTAEYGDYVSGPRVVTADTKKAMKEVLTDIQNGNFAKSFIDDNKNGFKEFHRMRKEQQGHQIEKVGAELREMMPFVKPQH.

A KARI N-terminal Rossmann domain is found at 2–181 (TKVYYEDAVK…GATRAGVIET (180 aa)). Residues 25–28 (YGSQ), Arg-48, Ser-52, and 82–85 (DETQ) contribute to the NADP(+) site. Residue His-107 is part of the active site. Gly-133 provides a ligand contact to NADP(+). Residues 182 to 327 (TFKEETETDL…AELREMMPFV (146 aa)) form the KARI C-terminal knotted domain. The Mg(2+) site is built by Asp-190, Glu-194, Glu-226, and Glu-230. Residue Ser-251 coordinates substrate.

Belongs to the ketol-acid reductoisomerase family. The cofactor is Mg(2+).

The enzyme catalyses (2R)-2,3-dihydroxy-3-methylbutanoate + NADP(+) = (2S)-2-acetolactate + NADPH + H(+). It catalyses the reaction (2R,3R)-2,3-dihydroxy-3-methylpentanoate + NADP(+) = (S)-2-ethyl-2-hydroxy-3-oxobutanoate + NADPH + H(+). It functions in the pathway amino-acid biosynthesis; L-isoleucine biosynthesis; L-isoleucine from 2-oxobutanoate: step 2/4. Its pathway is amino-acid biosynthesis; L-valine biosynthesis; L-valine from pyruvate: step 2/4. In terms of biological role, involved in the biosynthesis of branched-chain amino acids (BCAA). Catalyzes an alkyl-migration followed by a ketol-acid reduction of (S)-2-acetolactate (S2AL) to yield (R)-2,3-dihydroxy-isovalerate. In the isomerase reaction, S2AL is rearranged via a Mg-dependent methyl migration to produce 3-hydroxy-3-methyl-2-ketobutyrate (HMKB). In the reductase reaction, this 2-ketoacid undergoes a metal-dependent reduction by NADPH to yield (R)-2,3-dihydroxy-isovalerate. The protein is Ketol-acid reductoisomerase (NADP(+)) of Listeria innocua serovar 6a (strain ATCC BAA-680 / CLIP 11262).